A 932-amino-acid polypeptide reads, in one-letter code: Ribosome biogenesis protein ERB1 (932 aa).

Residues 1–18 are compositionally biased toward low complexity; the sequence is MVRPSSSSSASASAARSG. The segment at 1–229 is disordered; it reads MVRPSSSSSA…RSQAAQAFDL (229 aa). Polar residues predominate over residues 27-36; it reads PTATNPTTRA. 2 stretches are compositionally biased toward acidic residues: residues 57–119 and 150–172; these read VSDD…EVDS and DNSD…DEDE. Residues 175 to 184 show a composition bias toward low complexity; that stretch reads SAFAARSDAS. WD repeat units lie at residues 555–594 and 604–644; these read PDGG…CTAS and AERS…NYAK. Positions 679–698 are disordered; it reads SMPSKPDARSPVAWTRPSEA. WD repeat units lie at residues 762-800, 803-842, 846-885, and 901-932; these read SKGS…LIKT, SGFK…RPYK, YHAR…DYGE, and KNGL…LWTT.

It belongs to the WD repeat BOP1/ERB1 family. In terms of assembly, component of the NOP7 complex, composed of ERB1, NOP7 and YTM1. The complex is held together by ERB1, which interacts with NOP7 via its N-terminal domain and with YTM1 via a high-affinity interaction between the seven-bladed beta-propeller domains of the 2 proteins. The NOP7 complex associates with the 66S pre-ribosome.

It is found in the nucleus. It localises to the nucleolus. The protein localises to the nucleoplasm. Functionally, component of the NOP7 complex, which is required for maturation of the 25S and 5.8S ribosomal RNAs and formation of the 60S ribosome. This is Ribosome biogenesis protein ERB1 from Mycosarcoma maydis (Corn smut fungus).